The primary structure comprises 43 residues: Protein PsbN (43 aa).

The chain crosses the membrane as a helical span at residues 5–25 (TVLSIFISSLLLGITIYSIYI).

Belongs to the PsbN family.

Its subcellular location is the plastid. It is found in the chloroplast thylakoid membrane. May play a role in photosystem I and II biogenesis. This chain is Protein PsbN, found in Gracilaria tenuistipitata var. liui (Red alga).